Reading from the N-terminus, the 193-residue chain is Peptidyl-tRNA hydrolase (193 aa).

A tRNA-binding site is contributed by tyrosine 16. Residue histidine 21 is the Proton acceptor of the active site. TRNA-binding residues include phenylalanine 67, asparagine 69, and asparagine 115.

The protein belongs to the PTH family. In terms of assembly, monomer.

It is found in the cytoplasm. The enzyme catalyses an N-acyl-L-alpha-aminoacyl-tRNA + H2O = an N-acyl-L-amino acid + a tRNA + H(+). Hydrolyzes ribosome-free peptidyl-tRNAs (with 1 or more amino acids incorporated), which drop off the ribosome during protein synthesis, or as a result of ribosome stalling. Its function is as follows. Catalyzes the release of premature peptidyl moieties from peptidyl-tRNA molecules trapped in stalled 50S ribosomal subunits, and thus maintains levels of free tRNAs and 50S ribosomes. The polypeptide is Peptidyl-tRNA hydrolase (Psychrobacter cryohalolentis (strain ATCC BAA-1226 / DSM 17306 / VKM B-2378 / K5)).